A 463-amino-acid chain; its full sequence is Argininosuccinate lyase (463 aa).

This sequence belongs to the lyase 1 family. Argininosuccinate lyase subfamily.

Its subcellular location is the cytoplasm. The catalysed reaction is 2-(N(omega)-L-arginino)succinate = fumarate + L-arginine. It participates in amino-acid biosynthesis; L-arginine biosynthesis; L-arginine from L-ornithine and carbamoyl phosphate: step 3/3. The sequence is that of Argininosuccinate lyase from Prochlorococcus marinus (strain NATL1A).